The chain runs to 743 residues: Threonine--tRNA ligase (743 aa).

Residues Met-1–Ala-15 are compositionally biased toward low complexity. The tract at residues Met-1–Pro-30 is disordered. One can recognise a TGS domain in the interval Gln-13–Val-76. The interval Asp-264–Pro-619 is catalytic. The insert stretch occupies residues Ala-354 to Leu-404. Zn(2+)-binding residues include Cys-416, His-467, and His-596.

It belongs to the class-II aminoacyl-tRNA synthetase family. As to quaternary structure, homodimer. It depends on Zn(2+) as a cofactor.

It is found in the cytoplasm. The catalysed reaction is tRNA(Thr) + L-threonine + ATP = L-threonyl-tRNA(Thr) + AMP + diphosphate + H(+). Its function is as follows. Catalyzes the attachment of threonine to tRNA(Thr) in a two-step reaction: L-threonine is first activated by ATP to form Thr-AMP and then transferred to the acceptor end of tRNA(Thr). Also edits incorrectly charged L-seryl-tRNA(Thr). This chain is Threonine--tRNA ligase, found in Rhodopirellula baltica (strain DSM 10527 / NCIMB 13988 / SH1).